The sequence spans 148 residues: Lysozyme-like protein 6 (148 aa).

An N-terminal signal peptide occupies residues 1-19 (MTKALLIYLVSSFLALNQA). A C-type lysozyme domain is found at 20 to 148 (SLISRCDLAQ…FYWLTGCRLR (129 aa)). 4 disulfides stabilise this stretch: cysteine 25–cysteine 145, cysteine 49–cysteine 133, cysteine 83–cysteine 98, and cysteine 94–cysteine 112. Residues glutamate 54 and aspartate 71 contribute to the active site.

The protein belongs to the glycosyl hydrolase 22 family. As to quaternary structure, monomer. Expressed in testis, epididymis and spermatozoa (at protein level). Expressed in late-stage spermatocytes and round spermatids.

Its subcellular location is the secreted. The protein resides in the cell surface. The protein localises to the cell projection. It localises to the cilium. It is found in the flagellum. The enzyme catalyses Hydrolysis of (1-&gt;4)-beta-linkages between N-acetylmuramic acid and N-acetyl-D-glucosamine residues in a peptidoglycan and between N-acetyl-D-glucosamine residues in chitodextrins.. Functionally, may be involved sperm-egg plasma membrane adhesion and fusion during fertilization. Exhibits bacteriolytic activity in vitro against Micrococcus luteus and Staphylococcus aureus. Shows weak bacteriolytic activity against Gram-positive bacteria at physiological pH. Bacteriolytic activity is pH-dependent, with a maximum at around pH 5.6. The chain is Lysozyme-like protein 6 (LYZL6) from Homo sapiens (Human).